The sequence spans 575 residues: MPHVITQSCCNDASCVFACPVNCIHPTPDEPGFATSEMLYIDPVACVDCGACVTACPVSAIAPNTRLDFEQLPFVEINASYYPKRPAGVKLAPTSKLAPVTPAAEVRVRRQPLTVAVVGSGPAAMYAADELLVQQGVQVNVFEKLPTPYGLVRSGVAPDHQNTKRVTRLFDRIAGHRRFRFYLNVEIGKHLGHAELLAHHHAVLYAVGAPDDRRLTIDGMGLPGTGTATELVAWLNGHPDFNDLPVDLSHERVVIIGNGNVALDVARVLAADPHELAATDIADHALSALRNSAVREVVVAARRGPAHSAFTLPELIGLTAGADVVLDPGDHQRVLDDLAIVADPLTRNKLEILSTLGDGSAPARRVGRPRIRLAYRLTPRRVLGQRRAGGVQFSVTGTDELRQLDAGLVLTSIGYRGKPIPDLPFDEQAALVPNDGGRVIDPGTGEPVPGAYVAGWIKRGPTGFIGTNKSCSMQTVQALVADFNDGRLTDPVATPTALDQLVQARQPQAIGCAGWRAIDAAEIARGSADGRVRNKFTDVAEMLAAATSAPKEPLRRRVLARLRDLGQPIVLTVPL.

2 consecutive 4Fe-4S ferredoxin-type domains span residues 2–29 and 37–66; these read PHVITQSCCNDASCVFACPVNCIHPTPD and EMLYIDPVACVDCGACVTACPVSAIAPNTR. 7 residues coordinate [4Fe-4S] cluster: Cys9, Cys15, Cys19, Cys46, Cys49, Cys52, and Cys56. A ferredoxin--NADP reductase region spans residues 115-575; that stretch reads VAVVGSGPAA…GQPIVLTVPL (461 aa). 4 residues coordinate FAD: Ala123, Glu143, Leu151, and Ile187. NADP(+)-binding positions include Arg213, 258–261, 302–303, and Glu314; these read NGNV and RR. Residues Trp456 and 463-465 contribute to the FAD site; that span reads GFI. Residue Gly463 coordinates NADP(+).

It in the C-terminal section; belongs to the ferredoxin--NADP reductase family. The cofactor is [4Fe-4S] cluster. FAD serves as cofactor.

The catalysed reaction is 2 reduced [2Fe-2S]-[ferredoxin] + NADP(+) + H(+) = 2 oxidized [2Fe-2S]-[ferredoxin] + NADPH. This is Probable ferredoxin/ferredoxin--NADP reductase (fprB) from Mycobacterium bovis (strain ATCC BAA-935 / AF2122/97).